The following is a 966-amino-acid chain: C4 phosphoenolpyruvate carboxylase (966 aa).

The residue at position 11 (Ser-11) is a Phosphoserine. Residue His-172 is part of the active site. Trp-283, Arg-450, and Asp-597 together coordinate D-glucose 6-phosphate. Residue Lys-600 is part of the active site. Arg-635 contacts D-glucose 6-phosphate. Arg-641 is a catalytic residue. Position 641 (Arg-641) interacts with L-aspartate. Thr-665 provides a ligand contact to D-glucose 6-phosphate. Gln-673 is an L-aspartate binding site. D-glucose 6-phosphate is bound by residues Arg-753 and 767–769 (RAI). 3 residues coordinate L-aspartate: Lys-829, Arg-888, and Asn-964.

Belongs to the PEPCase type 1 family. Homotetramer. The cofactor is Mg(2+). Expressed in mesophyll cells, but not in bundle-sheath, roots, stems and flowers.

It localises to the cytoplasm. It catalyses the reaction oxaloacetate + phosphate = phosphoenolpyruvate + hydrogencarbonate. It functions in the pathway photosynthesis; C4 acid pathway. With respect to regulation, 5 fold activation by the allosteric regulator glucose-6-phosphate. Low sensitivity to inhibition by L-malate and L-aspartate. Up-regulated by light-reversible phosphorylation. Functionally, forms oxaloacetate through the carboxylation of phosphoenolpyruvate (PEP). Catalyzes the first step of C4 photosynthesis. The protein is C4 phosphoenolpyruvate carboxylase of Flaveria trinervia (Clustered yellowtops).